We begin with the raw amino-acid sequence, 236 residues long: Phosphoglycolate phosphatase (236 aa).

Residue D23 is the Nucleophile of the active site. Positions 23 and 25 each coordinate Mg(2+). K162 serves as a coordination point for substrate. Positions 185 and 189 each coordinate Mg(2+).

Belongs to the archaeal SPP-like hydrolase family. Requires Mg(2+) as cofactor.

The catalysed reaction is 2-phosphoglycolate + H2O = glycolate + phosphate. Functionally, catalyzes the dephosphorylation of 2-phosphoglycolate. The polypeptide is Phosphoglycolate phosphatase (Picrophilus torridus (strain ATCC 700027 / DSM 9790 / JCM 10055 / NBRC 100828 / KAW 2/3)).